The sequence spans 469 residues: CBL-interacting serine/threonine-protein kinase 16 (469 aa).

In terms of domain architecture, Protein kinase spans 15–278 (YNIGRLLGTG…MSEIKMIPWF (264 aa)). ATP is bound by residues 21 to 29 (LGTGNFAKV) and Lys-44. The Proton acceptor role is filled by Asp-139. The segment at 157–193 (DFGLSALMMPEGLGGRRGSSDDLLHTRCGTPAYVAPE) is activation loop. A Phosphoserine modification is found at Ser-161. Thr-182 bears the Phosphothreonine mark. A disordered region spans residues 290–320 (IDETIPSPPEPPTKKKKKDLNEKEDDGASPR). The NAF domain occupies 317–342 (ASPRSFNAFQFITSMSSGFDLSNLFE). The tract at residues 346–376 (KPKRMFTSKFPAKSVKERLETAAREMDMRVK) is PPI. A disordered region spans residues 447–469 (DDEDDVTTNDNVDTNDNKINNVS). The span at 454 to 469 (TNDNVDTNDNKINNVS) shows a compositional bias: low complexity.

Belongs to the protein kinase superfamily. CAMK Ser/Thr protein kinase family. SNF1 subfamily. Part of a K(+)-channel calcium-sensing kinase/phosphatase complex composed by a calcium sensor CBL (CBL1, CBL2, CBL3 or CBL9), a kinase CIPK (CIPK6, CIPK16 or CIPK23), a phosphatase PP2C (AIP1) and a K(+)-channel (AKT1). Interacts with AKT1, CBL1, CBL2, CBL3 and CBL9. Mn(2+) serves as cofactor.

It catalyses the reaction L-seryl-[protein] + ATP = O-phospho-L-seryl-[protein] + ADP + H(+). The catalysed reaction is L-threonyl-[protein] + ATP = O-phospho-L-threonyl-[protein] + ADP + H(+). In terms of biological role, CIPK serine-threonine protein kinases interact with CBL proteins. Binding of a CBL protein to the regulatory NAF domain of CIPK protein lead to the activation of the kinase in a calcium-dependent manner. Downstream of CBL1, CBL2, CBL3 and CBL9, regulates by phosphorylation the K(+) conductance and uptake of AKT1. In Arabidopsis thaliana (Mouse-ear cress), this protein is CBL-interacting serine/threonine-protein kinase 16 (CIPK16).